The sequence spans 147 residues: 3-dehydroquinate dehydratase (147 aa).

Catalysis depends on Y23, which acts as the Proton acceptor. Substrate is bound by residues N74, H80, and D87. H100 (proton donor) is an active-site residue. Residues 101–102 (LS) and R111 contribute to the substrate site.

Belongs to the type-II 3-dehydroquinase family. As to quaternary structure, homododecamer.

The catalysed reaction is 3-dehydroquinate = 3-dehydroshikimate + H2O. Its pathway is metabolic intermediate biosynthesis; chorismate biosynthesis; chorismate from D-erythrose 4-phosphate and phosphoenolpyruvate: step 3/7. Functionally, catalyzes a trans-dehydration via an enolate intermediate. This is 3-dehydroquinate dehydratase from Glaesserella parasuis serovar 5 (strain SH0165) (Haemophilus parasuis).